The chain runs to 1997 residues: Otoferlin (1997 aa).

One can recognise a C2 1 domain in the interval 1 to 98 (MALLIHLKTV…VEESHVEVTD (98 aa)). The Cytoplasmic portion of the chain corresponds to 1 to 1963 (MALLIHLKTV…ARYFLWHTYR (1963 aa)). The segment at 128-171 (WDDGDFLGDESLQEEEKDSQETDGLLPGSRPSSRPPGEKSFRRA) is disordered. Acidic residues predominate over residues 129–145 (DDGDFLGDESLQEEEKD). C2 domains follow at residues 236-357 (KRSK…HKWA) and 400-531 (IEGN…FLPT). The disordered stretch occupies residues 642–694 (NEVDGLSRPQRPRPRKEPGDEEEVDLIQNASDDEAGDAGDLASVSSTPPMRPQ). Residues 660–678 (GDEEEVDLIQNASDDEAGD) are compositionally biased toward acidic residues. The stretch at 792 to 821 (RERLKSCMRELENMGQQARMLRAQVKRHTV) forms a coiled coil. 2 C2 domains span residues 944-1069 (LHAF…PPRF) and 1115-1242 (DRGP…PSWN). Residues Asp976, Asp982, Asp1038, Asp1040, and Asp1046 each contribute to the Ca(2+) site. 2 disordered regions span residues 1299–1324 (AEEE…PDES) and 1343–1405 (LRQQ…KPKI). Composition is skewed to acidic residues over residues 1314 to 1324 (EEPEEEEPDES) and 1352 to 1361 (DLEEKEEVDN). A compositionally biased stretch (basic and acidic residues) spans 1370 to 1383 (KGKEKARAAKEEKK). Over residues 1387 to 1396 (QSSGSGQGSE) the composition is skewed to low complexity. C2 domains lie at 1464-1593 (LPED…ATCG) and 1714-1865 (DMPA…KQCT). Residues Asp1508, Asp1514, Asp1563, Asp1565, Asp1571, Asp1836, Ser1839, and Asp1842 each coordinate Ca(2+). The chain crosses the membrane as a helical span at residues 1964-1984 (WLLLKLLLLLLLLLLLALFLY). Topologically, residues 1985-1997 (SVPGYLVKKILGA) are extracellular.

This sequence belongs to the ferlin family. As to quaternary structure, interacts with SNAP2; the interaction is direct. Interacts with STX1; the interaction is direct. Interacts with RAB8B. Ca(2+) serves as cofactor. Isoform 1 and isoform 3 are found in adult brain. Isoform 2 is expressed in the fetus and in adult brain, heart, placenta, skeletal muscle and kidney.

Its subcellular location is the cytoplasmic vesicle. The protein resides in the secretory vesicle. It localises to the synaptic vesicle membrane. It is found in the basolateral cell membrane. The protein localises to the endoplasmic reticulum membrane. Its subcellular location is the golgi apparatus membrane. The protein resides in the presynaptic cell membrane. It localises to the cell membrane. Functionally, key calcium ion sensor involved in the Ca(2+)-triggered synaptic vesicle-plasma membrane fusion and in the control of neurotransmitter release at these output synapses. Interacts in a calcium-dependent manner to the presynaptic SNARE proteins at ribbon synapses of cochlear inner hair cells (IHCs) to trigger exocytosis of neurotransmitter. Also essential to synaptic exocytosis in immature outer hair cells (OHCs). May also play a role within the recycling of endosomes. In Homo sapiens (Human), this protein is Otoferlin (OTOF).